The following is a 197-amino-acid chain: Putative WUSCHEL-related homeobox 10 (197 aa).

Positions 75 to 139 (STRPRWTPTT…NRRARSKRKQ (65 aa)) form a DNA-binding region, homeobox; WUS-type. Residues 132–168 (RARSKRKQPPTTTITSSQADDAAVTTTEERGRCGDDS) are disordered. Positions 140 to 150 (PPTTTITSSQA) are enriched in polar residues.

The protein belongs to the WUS homeobox family.

The protein localises to the nucleus. Functionally, potential transcription factor that plays a central role during developmental processes. The protein is Putative WUSCHEL-related homeobox 10 (WOX10) of Arabidopsis thaliana (Mouse-ear cress).